Reading from the N-terminus, the 308-residue chain is Methionyl-tRNA formyltransferase (308 aa).

A (6S)-5,6,7,8-tetrahydrofolate-binding site is contributed by 109–112 (SLLP).

It belongs to the Fmt family.

The catalysed reaction is L-methionyl-tRNA(fMet) + (6R)-10-formyltetrahydrofolate = N-formyl-L-methionyl-tRNA(fMet) + (6S)-5,6,7,8-tetrahydrofolate + H(+). In terms of biological role, attaches a formyl group to the free amino group of methionyl-tRNA(fMet). The formyl group appears to play a dual role in the initiator identity of N-formylmethionyl-tRNA by promoting its recognition by IF2 and preventing the misappropriation of this tRNA by the elongation apparatus. The sequence is that of Methionyl-tRNA formyltransferase from Methylococcus capsulatus (strain ATCC 33009 / NCIMB 11132 / Bath).